The chain runs to 543 residues: Chaperonin GroEL (543 aa).

ATP-binding positions include 29-32 (TLGP), lysine 50, 86-90 (DGTTT), glycine 413, 480-482 (NAA), and aspartate 496. A disordered region spans residues 524 to 543 (EKPEKKESTPASAGAGDMDF).

It belongs to the chaperonin (HSP60) family. Forms a cylinder of 14 subunits composed of two heptameric rings stacked back-to-back. Interacts with the co-chaperonin GroES.

It is found in the cytoplasm. It catalyses the reaction ATP + H2O + a folded polypeptide = ADP + phosphate + an unfolded polypeptide.. Its function is as follows. Together with its co-chaperonin GroES, plays an essential role in assisting protein folding. The GroEL-GroES system forms a nano-cage that allows encapsulation of the non-native substrate proteins and provides a physical environment optimized to promote and accelerate protein folding. The sequence is that of Chaperonin GroEL from Thermus thermophilus (strain ATCC BAA-163 / DSM 7039 / HB27).